The sequence spans 454 residues: Glutamyl-tRNA reductase (454 aa).

Residues 50-53 (TCNR), S103, 108-110 (EDQ), and Q114 each bind substrate. C51 serves as the catalytic Nucleophile. NADP(+) is bound at residue 182 to 187 (GAGEMG). The tract at residues 407–454 (LFDPNFGGDTPQPDRPDDIPRAAERGDISGDDLPDDVPNHIAEKVSDG) is disordered. 2 stretches are compositionally biased toward basic and acidic residues: residues 418 to 434 (QPDRPDDIPRAAERGDI) and 443 to 454 (VPNHIAEKVSDG).

The protein belongs to the glutamyl-tRNA reductase family. Homodimer.

It catalyses the reaction (S)-4-amino-5-oxopentanoate + tRNA(Glu) + NADP(+) = L-glutamyl-tRNA(Glu) + NADPH + H(+). It functions in the pathway porphyrin-containing compound metabolism; protoporphyrin-IX biosynthesis; 5-aminolevulinate from L-glutamyl-tRNA(Glu): step 1/2. Functionally, catalyzes the NADPH-dependent reduction of glutamyl-tRNA(Glu) to glutamate 1-semialdehyde (GSA). This is Glutamyl-tRNA reductase from Haloquadratum walsbyi (strain DSM 16790 / HBSQ001).